Consider the following 513-residue polypeptide: Putative fucosyltransferase-like protein (513 aa).

The tract at residues 1–34 (MGVFSNLRGPRAGATHDEFPATNGSPSSSSSPSS) is disordered. The Cytoplasmic segment spans residues 1-39 (MGVFSNLRGPRAGATHDEFPATNGSPSSSSSPSSSIKRK). Residues 25–34 (SPSSSSSPSS) show a composition bias toward low complexity. Residues 40–60 (LSNLLPLCVALVVIAEIGFLG) traverse the membrane as a helical; Signal-anchor for type II membrane protein segment. Topologically, residues 61–513 (RLDKVALVDT…PCAKFEVVFV (453 aa)) are lumenal. 2 N-linked (GlcNAc...) asparagine glycosylation sites follow: Asn348 and Asn493.

Belongs to the glycosyltransferase 10 family.

The protein localises to the golgi apparatus. It is found in the golgi stack membrane. The protein operates within protein modification; protein glycosylation. May be involved in cell wall biosynthesis. May act as a fucosyltransferase. The protein is Putative fucosyltransferase-like protein (FUT12) of Arabidopsis thaliana (Mouse-ear cress).